The following is a 199-amino-acid chain: uncharacterized protein (199 aa).

The stretch at 72-116 (EIYSEIENEESDIEEMSEEMKAFFAKTQEHRQKLKEQRAAEKRKE) forms a coiled coil. A compositionally biased stretch (basic and acidic residues) spans 98 to 117 (TQEHRQKLKEQRAAEKRKEG). Residues 98–127 (TQEHRQKLKEQRAAEKRKEGQSSSKSQEEY) form a disordered region.

This is an uncharacterized protein from Caenorhabditis elegans.